The chain runs to 285 residues: Diphthine methyl ester synthase (285 aa).

Residues L9, D84, G87, 112–113, L163, V221, and H246 each bind S-adenosyl-L-methionine; that span reads SI.

The protein belongs to the diphthine synthase family.

It localises to the cytoplasm. The enzyme catalyses 2-[(3S)-amino-3-carboxypropyl]-L-histidyl-[translation elongation factor 2] + 4 S-adenosyl-L-methionine = diphthine methyl ester-[translation elongation factor 2] + 4 S-adenosyl-L-homocysteine + 3 H(+). Its pathway is protein modification; peptidyl-diphthamide biosynthesis. In terms of biological role, S-adenosyl-L-methionine-dependent methyltransferase that catalyzes four methylations of the modified target histidine residue in translation elongation factor 2 (EF-2), to form an intermediate called diphthine methyl ester. The four successive methylation reactions represent the second step of diphthamide biosynthesis. The protein is Diphthine methyl ester synthase (dph5) of Emericella nidulans (strain FGSC A4 / ATCC 38163 / CBS 112.46 / NRRL 194 / M139) (Aspergillus nidulans).